Consider the following 1076-residue polypeptide: Regulator of G-protein signaling protein-like (1076 aa).

An RGS domain is found at 645–764 (NLTEVLLNTQ…LFPPHHQEVE (120 aa)). Positions 834–852 (TTAHNTSGRSAPPSTNVRS) are enriched in polar residues. Residues 834-854 (TTAHNTSGRSAPPSTNVRSAD) form a disordered region. Residues 960 to 982 (VFHGAIMSVFPVVMYFWKRFCFW) form a helical membrane-spanning segment.

It localises to the membrane. This is Regulator of G-protein signaling protein-like (RGSL1) from Homo sapiens (Human).